A 54-amino-acid chain; its full sequence is MHTPIGVKPVAGSKEWREAWQKRAFAHISNGYKYIYIAIDSPEIFLLVCSLIRI.

This sequence belongs to the YojO family.

In Escherichia coli (strain K12), this protein is Protein YojO (yojO).